The following is a 156-amino-acid chain: Small ribosomal subunit protein uS7 (156 aa).

Belongs to the universal ribosomal protein uS7 family. In terms of assembly, part of the 30S ribosomal subunit. Contacts proteins S9 and S11.

One of the primary rRNA binding proteins, it binds directly to 16S rRNA where it nucleates assembly of the head domain of the 30S subunit. Is located at the subunit interface close to the decoding center, probably blocks exit of the E-site tRNA. In Staphylococcus carnosus (strain TM300), this protein is Small ribosomal subunit protein uS7.